A 737-amino-acid polypeptide reads, in one-letter code: Ribosome-releasing factor 2, mitochondrial (737 aa).

A mitochondrion-targeting transit peptide spans 1–29 (MLKYALHSGGMPRNRLLRQLSAHIFRRSY). The region spanning 31–310 (SNIRNIGILA…AVNTYLPAPE (280 aa)) is the tr-type G domain. GTP-binding positions include 40–47 (AHIDAGKT), 104–108 (DTPGH), and 158–161 (NKMD).

Belongs to the TRAFAC class translation factor GTPase superfamily. Classic translation factor GTPase family. EF-G/EF-2 subfamily.

It localises to the mitochondrion. In terms of biological role, mitochondrial GTPase that mediates the disassembly of ribosomes from messenger RNA at the termination of mitochondrial protein biosynthesis. Not involved in the GTP-dependent ribosomal translocation step during translation elongation. This Drosophila pseudoobscura pseudoobscura (Fruit fly) protein is Ribosome-releasing factor 2, mitochondrial.